A 336-amino-acid chain; its full sequence is Large ribosomal subunit protein uL1 (336 aa).

The segment at methionine 1–isoleucine 245 is large ribosomal subunit protein uL1. The unknown stretch occupies residues alanine 246 to lysine 336. Residues alanine 267–lysine 336 form a disordered region. Basic residues predominate over residues lysine 286–valine 305. The span at alanine 306–lysine 315 shows a compositional bias: low complexity.

Belongs to the universal ribosomal protein uL1 family. As to quaternary structure, part of the 50S ribosomal subunit.

In terms of biological role, binds directly to 23S rRNA. The L1 stalk is quite mobile in the ribosome, and is involved in E site tRNA release. Protein L1 is also a translational repressor protein, it controls the translation of the L11 operon by binding to its mRNA. This chain is Large ribosomal subunit protein uL1, found in Malacoplasma penetrans (strain HF-2) (Mycoplasma penetrans).